We begin with the raw amino-acid sequence, 910 residues long: Schlafen family member 8 (910 aa).

The tract at residues 1–354 is n'-domain region; it reads METHPSLAVK…WVRMMVDFGP (354 aa). Active-site residues include glutamate 205 and glutamate 210. Zn(2+) contacts are provided by histidine 280, cysteine 282, and cysteine 319. 599–606 provides a ligand contact to ATP; it reads GLPGSGKT.

It belongs to the Schlafen family. Subgroup III subfamily. Mg(2+) is required as a cofactor. In terms of tissue distribution, in T-cells, expressed at relatively constant levels during development: expressed in immature CD3(-)CD4(-)CD8(-) T-cells (DN stage), in CD4(+)CD8(+) double-positive stage (DP) and mature CD4(+) or CD8(+) thymocytes. Expression is slightly reduced at the DP stage.

It localises to the cytoplasm. Functionally, endoribonuclease that cleaves tRNAs and rRNAs. Cleaves tRNAs 11 nucleotides from the 3'-terminus at the acceptor stem. May be involved in immune system via regulation of inflammation. This is Schlafen family member 8 from Mus musculus (Mouse).